A 168-amino-acid polypeptide reads, in one-letter code: Photosystem I assembly protein Ycf3 (168 aa).

3 TPR repeats span residues 35-68, 72-105, and 120-153; these read AFTY…EMDP, SYIL…NPFL, and GEQA…TPGN.

This sequence belongs to the Ycf3 family.

The protein resides in the plastid. The protein localises to the chloroplast thylakoid membrane. Its function is as follows. Essential for the assembly of the photosystem I (PSI) complex. May act as a chaperone-like factor to guide the assembly of the PSI subunits. This is Photosystem I assembly protein Ycf3 from Plantago lanceolata (English plantain).